Consider the following 706-residue polypeptide: Ribosomal RNA large subunit methyltransferase K/L (706 aa).

The region spanning Leu-43–Leu-154 is the THUMP domain.

The protein belongs to the methyltransferase superfamily. RlmKL family.

The protein localises to the cytoplasm. It carries out the reaction guanosine(2445) in 23S rRNA + S-adenosyl-L-methionine = N(2)-methylguanosine(2445) in 23S rRNA + S-adenosyl-L-homocysteine + H(+). The catalysed reaction is guanosine(2069) in 23S rRNA + S-adenosyl-L-methionine = N(2)-methylguanosine(2069) in 23S rRNA + S-adenosyl-L-homocysteine + H(+). Functionally, specifically methylates the guanine in position 2445 (m2G2445) and the guanine in position 2069 (m7G2069) of 23S rRNA. This chain is Ribosomal RNA large subunit methyltransferase K/L, found in Yersinia enterocolitica serotype O:8 / biotype 1B (strain NCTC 13174 / 8081).